The primary structure comprises 241 residues: tRNA pseudouridine synthase A (241 aa).

Catalysis depends on D53, which acts as the Nucleophile. A substrate-binding site is contributed by Y110.

This sequence belongs to the tRNA pseudouridine synthase TruA family. Homodimer.

It catalyses the reaction uridine(38/39/40) in tRNA = pseudouridine(38/39/40) in tRNA. Functionally, formation of pseudouridine at positions 38, 39 and 40 in the anticodon stem and loop of transfer RNAs. The chain is tRNA pseudouridine synthase A from Malacoplasma penetrans (strain HF-2) (Mycoplasma penetrans).